Consider the following 406-residue polypeptide: Multifunctional CCA protein (406 aa).

Glycine 8 and arginine 11 together coordinate ATP. 2 residues coordinate CTP: glycine 8 and arginine 11. Aspartate 21 and aspartate 23 together coordinate Mg(2+). ATP is bound by residues arginine 91, arginine 138, and arginine 141. CTP is bound by residues arginine 91, arginine 138, and arginine 141. Positions 229–331 (TGIHQEMVSD…LELLGRCDAL (103 aa)) constitute an HD domain.

Belongs to the tRNA nucleotidyltransferase/poly(A) polymerase family. Bacterial CCA-adding enzyme type 1 subfamily. As to quaternary structure, monomer. Can also form homodimers and oligomers. It depends on Mg(2+) as a cofactor. Ni(2+) serves as cofactor.

The catalysed reaction is a tRNA precursor + 2 CTP + ATP = a tRNA with a 3' CCA end + 3 diphosphate. The enzyme catalyses a tRNA with a 3' CCA end + 2 CTP + ATP = a tRNA with a 3' CCACCA end + 3 diphosphate. In terms of biological role, catalyzes the addition and repair of the essential 3'-terminal CCA sequence in tRNAs without using a nucleic acid template. Adds these three nucleotides in the order of C, C, and A to the tRNA nucleotide-73, using CTP and ATP as substrates and producing inorganic pyrophosphate. tRNA 3'-terminal CCA addition is required both for tRNA processing and repair. Also involved in tRNA surveillance by mediating tandem CCA addition to generate a CCACCA at the 3' terminus of unstable tRNAs. While stable tRNAs receive only 3'-terminal CCA, unstable tRNAs are marked with CCACCA and rapidly degraded. In Stenotrophomonas maltophilia (strain R551-3), this protein is Multifunctional CCA protein.